Reading from the N-terminus, the 493-residue chain is MITRPIAHTTAGDLGGCLEDGLYVFRGVPYAEPPVGDLRWRAARPHAGWTGVRDASAYGPSAPQPVEPGGSPILGTHGDPPFDEDCLTLNLWTPNLDGGSRPVLVWIHGGGLLTGSGNLPNYATDTFARDGDLVGISINYRLGPLGFLAGMGDENVWLTDQVEALRWIADNVAAFGGDPNRITLVGQSGGAYSIAALAQHPVARQLFHRAILQSPPFGMQPHTVEESTARTKALARHLGHDDIEALRHEPWERLIQGTIGVLMEHTKFGEWPLAFYPVFDEATIPRHPIESIIDSDIEIIIGWTRDEGTFPFAFDPQVSQADRDQVESWLQKRFGDHAASAYEAHAGDGTSPWTVIANVVGDELFHSAGYRVADERATRRPVRAYQFDVVSPLSDGALGAVHCIEMPFTFANLDRWTGKPFVDGLDPDVVARVTNVLHQAWIAFVRTGDPTHDQLPVWPTFRADDPAVLVVGDEGAEVARDLARPDHVSVRTL.

The active-site Acyl-ester intermediate is the serine 188. Catalysis depends on charge relay system residues glutamate 307 and histidine 402.

The protein belongs to the type-B carboxylesterase/lipase family. In terms of assembly, monomer.

Functionally, may degrade the phenylcarbamate herbicides phenmedipham and desmedipham cometabolically by hydrolyzing their central carbamate linkages. Conveys resistance to the herbicide phenmedipham. The sequence is that of Phenmedipham hydrolase (pcd) from Pseudarthrobacter oxydans (Arthrobacter oxydans).